The following is a 106-amino-acid chain: MPRNTSHEHDHGLMVEASKPEVAPPPRYQVLLLNDDYTPMDFVVTVLEQFFNLNLEQATQIMLHVHTRGRGVCGVYSREVAESKVAQVNEFSRMNQHPLLCTMEQA.

Basic and acidic residues predominate over residues 1–13 (MPRNTSHEHDHGL). The segment at 1–20 (MPRNTSHEHDHGLMVEASKP) is disordered.

The protein belongs to the ClpS family. As to quaternary structure, binds to the N-terminal domain of the chaperone ClpA.

Its function is as follows. Involved in the modulation of the specificity of the ClpAP-mediated ATP-dependent protein degradation. The polypeptide is ATP-dependent Clp protease adapter protein ClpS (Xanthomonas axonopodis pv. citri (strain 306)).